We begin with the raw amino-acid sequence, 213 residues long: Proton-translocating ferredoxin:NAD(+) oxidoreductase complex subunit E (213 aa).

Transmembrane regions (helical) follow at residues Gly11 to Thr31, Phe39 to Ile59, Val69 to Ala89, Leu93 to Ala113, Phe128 to Ile148, and Ala170 to Val190.

Belongs to the NqrDE/RnfAE family. In terms of assembly, the complex is composed of six subunits: RnfA, RnfB, RnfC, RnfD, RnfE and RnfG.

It localises to the cell membrane. Its function is as follows. Part of a membrane-bound complex that couples electron transfer with translocation of ions across the membrane. Couples electron transfer from reduced ferredoxin to NAD(+) with translocation of H(+) out of the cell. Essential for energy conservation during autotrophic growth. Contributes to ATP synthesis during heterotrophic growth. The chain is Proton-translocating ferredoxin:NAD(+) oxidoreductase complex subunit E from Clostridium ljungdahlii (strain ATCC 55383 / DSM 13528 / PETC).